A 549-amino-acid polypeptide reads, in one-letter code: Glucose-6-phosphate isomerase (549 aa).

The active-site Proton donor is E355. Residues H386 and K514 contribute to the active site.

This sequence belongs to the GPI family.

The protein resides in the cytoplasm. It carries out the reaction alpha-D-glucose 6-phosphate = beta-D-fructose 6-phosphate. It participates in carbohydrate biosynthesis; gluconeogenesis. The protein operates within carbohydrate degradation; glycolysis; D-glyceraldehyde 3-phosphate and glycerone phosphate from D-glucose: step 2/4. Its function is as follows. Catalyzes the reversible isomerization of glucose-6-phosphate to fructose-6-phosphate. In Enterobacter sp. (strain 638), this protein is Glucose-6-phosphate isomerase.